Reading from the N-terminus, the 193-residue chain is Holliday junction branch migration complex subunit RuvA (193 aa).

Residues 1–64 (MIGRIAGILL…EDANLLYGFL (64 aa)) are domain I. The interval 65 to 139 (TPQERTTFRE…GKLGADLGEL (75 aa)) is domain II. The flexible linker stretch occupies residues 139-143 (LAGAA). The tract at residues 144–193 (SPSDHATDILNALLALGYSEKEGLAAIKNVPAGTGVSEGIKLALKALSKV) is domain III.

Belongs to the RuvA family. As to quaternary structure, homotetramer. Forms an RuvA(8)-RuvB(12)-Holliday junction (HJ) complex. HJ DNA is sandwiched between 2 RuvA tetramers; dsDNA enters through RuvA and exits via RuvB. An RuvB hexamer assembles on each DNA strand where it exits the tetramer. Each RuvB hexamer is contacted by two RuvA subunits (via domain III) on 2 adjacent RuvB subunits; this complex drives branch migration. In the full resolvosome a probable DNA-RuvA(4)-RuvB(12)-RuvC(2) complex forms which resolves the HJ.

Its subcellular location is the cytoplasm. The RuvA-RuvB-RuvC complex processes Holliday junction (HJ) DNA during genetic recombination and DNA repair, while the RuvA-RuvB complex plays an important role in the rescue of blocked DNA replication forks via replication fork reversal (RFR). RuvA specifically binds to HJ cruciform DNA, conferring on it an open structure. The RuvB hexamer acts as an ATP-dependent pump, pulling dsDNA into and through the RuvAB complex. HJ branch migration allows RuvC to scan DNA until it finds its consensus sequence, where it cleaves and resolves the cruciform DNA. This Burkholderia lata (strain ATCC 17760 / DSM 23089 / LMG 22485 / NCIMB 9086 / R18194 / 383) protein is Holliday junction branch migration complex subunit RuvA.